We begin with the raw amino-acid sequence, 338 residues long: Phenylalanine--tRNA ligase alpha subunit (338 aa).

Glu-259 is a Mg(2+) binding site.

This sequence belongs to the class-II aminoacyl-tRNA synthetase family. Phe-tRNA synthetase alpha subunit type 1 subfamily. As to quaternary structure, tetramer of two alpha and two beta subunits. Requires Mg(2+) as cofactor.

The protein localises to the cytoplasm. The enzyme catalyses tRNA(Phe) + L-phenylalanine + ATP = L-phenylalanyl-tRNA(Phe) + AMP + diphosphate + H(+). This chain is Phenylalanine--tRNA ligase alpha subunit, found in Herminiimonas arsenicoxydans.